We begin with the raw amino-acid sequence, 202 residues long: ATP-dependent Clp protease proteolytic subunit (202 aa).

Serine 106 serves as the catalytic Nucleophile. Residue histidine 131 is part of the active site.

It belongs to the peptidase S14 family. In terms of assembly, fourteen ClpP subunits assemble into 2 heptameric rings which stack back to back to give a disk-like structure with a central cavity, resembling the structure of eukaryotic proteasomes.

It localises to the cytoplasm. The enzyme catalyses Hydrolysis of proteins to small peptides in the presence of ATP and magnesium. alpha-casein is the usual test substrate. In the absence of ATP, only oligopeptides shorter than five residues are hydrolyzed (such as succinyl-Leu-Tyr-|-NHMec, and Leu-Tyr-Leu-|-Tyr-Trp, in which cleavage of the -Tyr-|-Leu- and -Tyr-|-Trp bonds also occurs).. Functionally, cleaves peptides in various proteins in a process that requires ATP hydrolysis. Has a chymotrypsin-like activity. Plays a major role in the degradation of misfolded proteins. The chain is ATP-dependent Clp protease proteolytic subunit from Shewanella oneidensis (strain ATCC 700550 / JCM 31522 / CIP 106686 / LMG 19005 / NCIMB 14063 / MR-1).